Consider the following 158-residue polypeptide: Phosphopantetheine adenylyltransferase (158 aa).

Threonine 9 lines the substrate pocket. ATP contacts are provided by residues 9 to 10 (TF) and histidine 17. Substrate-binding residues include lysine 41, leucine 73, and arginine 87. ATP contacts are provided by residues 88-90 (GVR), glutamate 98, and 123-129 (WSYVSST).

Belongs to the bacterial CoaD family. In terms of assembly, homohexamer. It depends on Mg(2+) as a cofactor.

It localises to the cytoplasm. The catalysed reaction is (R)-4'-phosphopantetheine + ATP + H(+) = 3'-dephospho-CoA + diphosphate. The protein operates within cofactor biosynthesis; coenzyme A biosynthesis; CoA from (R)-pantothenate: step 4/5. Its function is as follows. Reversibly transfers an adenylyl group from ATP to 4'-phosphopantetheine, yielding dephospho-CoA (dPCoA) and pyrophosphate. The sequence is that of Phosphopantetheine adenylyltransferase from Histophilus somni (strain 2336) (Haemophilus somnus).